The sequence spans 292 residues: tRNA pseudouridine synthase B (292 aa).

D38 acts as the Nucleophile in catalysis.

This sequence belongs to the pseudouridine synthase TruB family. Type 1 subfamily.

The catalysed reaction is uridine(55) in tRNA = pseudouridine(55) in tRNA. Functionally, responsible for synthesis of pseudouridine from uracil-55 in the psi GC loop of transfer RNAs. The chain is tRNA pseudouridine synthase B from Streptococcus sanguinis (strain SK36).